Here is a 334-residue protein sequence, read N- to C-terminus: tRNA N6-adenosine threonylcarbamoyltransferase (334 aa).

Fe cation contacts are provided by histidine 107 and histidine 111. Residues 129-133, aspartate 162, glycine 175, and asparagine 269 each bind substrate; that span reads LVSGG. Aspartate 297 provides a ligand contact to Fe cation.

It belongs to the KAE1 / TsaD family. Fe(2+) is required as a cofactor.

Its subcellular location is the cytoplasm. The enzyme catalyses L-threonylcarbamoyladenylate + adenosine(37) in tRNA = N(6)-L-threonylcarbamoyladenosine(37) in tRNA + AMP + H(+). Functionally, required for the formation of a threonylcarbamoyl group on adenosine at position 37 (t(6)A37) in tRNAs that read codons beginning with adenine. Is involved in the transfer of the threonylcarbamoyl moiety of threonylcarbamoyl-AMP (TC-AMP) to the N6 group of A37, together with TsaE and TsaB. TsaD likely plays a direct catalytic role in this reaction. The polypeptide is tRNA N6-adenosine threonylcarbamoyltransferase (Campylobacter concisus (strain 13826)).